Here is an 862-residue protein sequence, read N- to C-terminus: Short transient receptor potential channel 7 (862 aa).

Positions M1 to G21 are disordered. Over M1–K351 the chain is Cytoplasmic. Positions M10–G21 are enriched in basic residues. T15 is subject to Phosphothreonine; by PKG/PRKG1. 4 ANK repeats span residues P42 to F71, M77 to V106, D108 to G134, and H163 to R192. Residues F352–A372 form a helical membrane-spanning segment. The Extracellular portion of the chain corresponds to P373 to S383. The chain crosses the membrane as a helical span at residues P384–V404. The Cytoplasmic portion of the chain corresponds to N405–E465. Residues Y466–F486 form a helical membrane-spanning segment. Residues T487–Q537 lie on the Extracellular side of the membrane. A glycan (N-linked (GlcNAc...) asparagine) is linked at N514. A helical membrane pass occupies residues I538–I558. The Cytoplasmic segment spans residues L559–K581. A helical membrane pass occupies residues F582–S602. Residues Y603–V651 lie on the Extracellular side of the membrane. Residues L652–I672 traverse the membrane as a helical segment. Topologically, residues N673 to I862 are cytoplasmic.

It belongs to the transient receptor (TC 1.A.4) family. STrpC subfamily. TRPC7 sub-subfamily. Interacts with MX1 and RNF24. Interacts (via ANK-repeat domains) with PRKG1. In terms of processing, phosphorylation by PRKG1 at Thr-15 negatively regulates TRPC7 activity.

The protein localises to the cell membrane. Its subcellular location is the nucleus envelope. The catalysed reaction is Ca(2+)(in) = Ca(2+)(out). In terms of biological role, forms a receptor-activated non-selective calcium permeant cation channel. Probably is operated by a phosphatidylinositol second messenger system activated by receptor tyrosine kinases or G-protein coupled receptors. Activated by diacylglycerol (DAG). May also be activated by intracellular calcium store depletion. This is Short transient receptor potential channel 7 (Trpc7) from Mus musculus (Mouse).